Here is a 500-residue protein sequence, read N- to C-terminus: Aspartyl/glutamyl-tRNA(Asn/Gln) amidotransferase subunit B (500 aa).

The protein belongs to the GatB/GatE family. GatB subfamily. In terms of assembly, heterotrimer of A, B and C subunits.

The enzyme catalyses L-glutamyl-tRNA(Gln) + L-glutamine + ATP + H2O = L-glutaminyl-tRNA(Gln) + L-glutamate + ADP + phosphate + H(+). It catalyses the reaction L-aspartyl-tRNA(Asn) + L-glutamine + ATP + H2O = L-asparaginyl-tRNA(Asn) + L-glutamate + ADP + phosphate + 2 H(+). In terms of biological role, allows the formation of correctly charged Asn-tRNA(Asn) or Gln-tRNA(Gln) through the transamidation of misacylated Asp-tRNA(Asn) or Glu-tRNA(Gln) in organisms which lack either or both of asparaginyl-tRNA or glutaminyl-tRNA synthetases. The reaction takes place in the presence of glutamine and ATP through an activated phospho-Asp-tRNA(Asn) or phospho-Glu-tRNA(Gln). This is Aspartyl/glutamyl-tRNA(Asn/Gln) amidotransferase subunit B from Sinorhizobium medicae (strain WSM419) (Ensifer medicae).